The following is a 250-amino-acid chain: Putative ankyrin repeat protein RBE_0623 (250 aa).

ANK repeat units lie at residues 70–99, 104–134, and 137–166; these read IGDS…EPNT, NCYT…NINE, and GKET…PDKF.

The sequence is that of Putative ankyrin repeat protein RBE_0623 from Rickettsia bellii (strain RML369-C).